Reading from the N-terminus, the 124-residue chain is Small ribosomal subunit protein uS13 (124 aa).

The segment at 95–124 (GLPVRGQRTKTNARTRKGPKRTIAGKKKAR) is disordered.

The protein belongs to the universal ribosomal protein uS13 family. Part of the 30S ribosomal subunit. Forms a loose heterodimer with protein S19. Forms two bridges to the 50S subunit in the 70S ribosome.

Its function is as follows. Located at the top of the head of the 30S subunit, it contacts several helices of the 16S rRNA. In the 70S ribosome it contacts the 23S rRNA (bridge B1a) and protein L5 of the 50S subunit (bridge B1b), connecting the 2 subunits; these bridges are implicated in subunit movement. Contacts the tRNAs in the A and P-sites. This chain is Small ribosomal subunit protein uS13, found in Mycobacterium marinum (strain ATCC BAA-535 / M).